The following is a 228-amino-acid chain: Adapter protein MecA (228 aa).

The disordered stretch occupies residues 79-98 (GQKNDDSAADQTDDEGTDTQ). Over residues 85-95 (SAADQTDDEGT) the composition is skewed to acidic residues.

It belongs to the MecA family. As to quaternary structure, homodimer.

Its function is as follows. Enables the recognition and targeting of unfolded and aggregated proteins to the ClpC protease or to other proteins involved in proteolysis. This Lacticaseibacillus casei (strain BL23) (Lactobacillus casei) protein is Adapter protein MecA.